A 466-amino-acid polypeptide reads, in one-letter code: GATA-binding factor 2 (466 aa).

Composition is skewed to low complexity over residues 139–155 (GSST…TPAS) and 174–188 (PDPN…SSSA). The segment at 139 to 196 (GSSTSSTASVSSLTPASHSGSHLFGFPPTPPKEVSPDPNSTSAASPSSSAGARQEDKD) is disordered. 2 GATA-type zinc fingers span residues 281-305 (CVNC…CNAC) and 335-359 (CANC…CNAC). The segment at 436-466 (GHILPTPTPIHPSSSISFGHPHPSSMVTAMG) is disordered.

In terms of tissue distribution, expressed in all developmental stages of erythroid cells but is additionally found in a limited subset of other tissues.

It localises to the nucleus. In terms of biological role, transcriptional activator which probably serves as a general switch factor for cell-specific development. It binds to DNA sites with the consensus sequence 5'-[AT]GATA[AG]-3' within regulatory regions of genes. This Gallus gallus (Chicken) protein is GATA-binding factor 2 (GATA2).